A 361-amino-acid chain; its full sequence is Probable dual-specificity RNA methyltransferase RlmN (361 aa).

Catalysis depends on glutamate 102, which acts as the Proton acceptor. Residues 108 to 344 (SGDRLTVCVS…VRWSKGLGAD (237 aa)) enclose the Radical SAM core domain. Residues cysteine 115 and cysteine 347 are joined by a disulfide bond. [4Fe-4S] cluster is bound by residues cysteine 122, cysteine 126, and cysteine 129. S-adenosyl-L-methionine is bound by residues 169–170 (GE), serine 199, 228–230 (SLH), and asparagine 304. Cysteine 347 functions as the S-methylcysteine intermediate in the catalytic mechanism.

This sequence belongs to the radical SAM superfamily. RlmN family. [4Fe-4S] cluster is required as a cofactor.

It localises to the cytoplasm. The catalysed reaction is adenosine(2503) in 23S rRNA + 2 reduced [2Fe-2S]-[ferredoxin] + 2 S-adenosyl-L-methionine = 2-methyladenosine(2503) in 23S rRNA + 5'-deoxyadenosine + L-methionine + 2 oxidized [2Fe-2S]-[ferredoxin] + S-adenosyl-L-homocysteine. It catalyses the reaction adenosine(37) in tRNA + 2 reduced [2Fe-2S]-[ferredoxin] + 2 S-adenosyl-L-methionine = 2-methyladenosine(37) in tRNA + 5'-deoxyadenosine + L-methionine + 2 oxidized [2Fe-2S]-[ferredoxin] + S-adenosyl-L-homocysteine. Its function is as follows. Specifically methylates position 2 of adenine 2503 in 23S rRNA and position 2 of adenine 37 in tRNAs. This Synechococcus elongatus (strain ATCC 33912 / PCC 7942 / FACHB-805) (Anacystis nidulans R2) protein is Probable dual-specificity RNA methyltransferase RlmN.